The primary structure comprises 135 residues: Protein 4.7 (135 aa).

The polypeptide is Protein 4.7 (Escherichia coli (Bacteriophage T7)).